Here is a 185-residue protein sequence, read N- to C-terminus: Elongation factor P (185 aa).

It belongs to the elongation factor P family.

The protein localises to the cytoplasm. The protein operates within protein biosynthesis; polypeptide chain elongation. In terms of biological role, involved in peptide bond synthesis. Stimulates efficient translation and peptide-bond synthesis on native or reconstituted 70S ribosomes in vitro. Probably functions indirectly by altering the affinity of the ribosome for aminoacyl-tRNA, thus increasing their reactivity as acceptors for peptidyl transferase. This chain is Elongation factor P, found in Mesomycoplasma hyopneumoniae (strain 7448) (Mycoplasma hyopneumoniae).